The chain runs to 167 residues: Endoribonuclease YbeY (167 aa).

3 residues coordinate Zn(2+): His-126, His-130, and His-136.

This sequence belongs to the endoribonuclease YbeY family. Requires Zn(2+) as cofactor.

It is found in the cytoplasm. Functionally, single strand-specific metallo-endoribonuclease involved in late-stage 70S ribosome quality control and in maturation of the 3' terminus of the 16S rRNA. This Novosphingobium aromaticivorans (strain ATCC 700278 / DSM 12444 / CCUG 56034 / CIP 105152 / NBRC 16084 / F199) protein is Endoribonuclease YbeY.